A 496-amino-acid polypeptide reads, in one-letter code: Probable diguanylate cyclase DgcJ (496 aa).

Helical transmembrane passes span phenylalanine 11 to serine 31 and isoleucine 305 to isoleucine 325. The 123-residue stretch at serine 374–serine 496 folds into the GGDEF domain. Position 382 (aspartate 382) interacts with Mg(2+). Substrate is bound by residues asparagine 390, histidine 395, and aspartate 399. Position 425 (aspartate 425) interacts with Mg(2+). Residue aspartate 425 is the Proton acceptor of the active site.

In terms of assembly, homodimer. Mg(2+) serves as cofactor.

It is found in the cell inner membrane. The catalysed reaction is 2 GTP = 3',3'-c-di-GMP + 2 diphosphate. Its pathway is purine metabolism; 3',5'-cyclic di-GMP biosynthesis. Catalyzes the synthesis of cyclic-di-GMP (c-di-GMP) via the condensation of 2 GTP molecules. This chain is Probable diguanylate cyclase DgcJ, found in Escherichia coli (strain K12).